A 176-amino-acid polypeptide reads, in one-letter code: Sigma intracellular receptor 2 (176 aa).

The Cytoplasmic portion of the chain corresponds to 1 to 9 (MGAPATRRC). The chain crosses the membrane as a helical span at residues 10–30 (VEWLLGLYFLSHIPITLFMDL). Positions 10 to 158 (VEWLLGLYFL…PYLLIPFILL (149 aa)) constitute an EXPERA domain. Residues 31-68 (QAVLPRELYPVEFRNLLKWYAKEFKDPLLQEPPAWFKS) lie on the Lumenal side of the membrane. The helical transmembrane segment at 69-89 (FLFCELVFQLPFFPIATYAFL) threads the bilayer. Cholesterol-binding residues include Val-75 and Gln-77. The Cytoplasmic segment spans residues 90-99 (KGSCKWIRTP). The chain crosses the membrane as a helical span at residues 100-120 (AIIYSVHTMTTLIPILSTFLF). The segment at 108–176 (MTTLIPILST…YKYEEKRKKK (69 aa)) is required for interaction with Hst1/HTN1. Over 121–140 (EDFSKASGFKGQRPETLHER) the chain is Lumenal. A helical membrane pass occupies residues 141 to 161 (LTLVSVYAPYLLIPFILLIFM). Topologically, residues 162–176 (LRSPYYKYEEKRKKK) are cytoplasmic. The short motif at 172–176 (KRKKK) is the ER retention motif element.

The protein belongs to the TMEM97/sigma-2 receptor family. As to quaternary structure, homodimer. Interacts with NPC1; the interaction impairs NPC1-mediated cholesterol transport. Interacts with PGRMC1 and LDLR; the interaction increases LDL internalization. Interacts with histatin 1/HTN1; the interaction induces HTN1-stimulating wound healing. Interacts with TSPO. Forms a complex with TSPO and PGRMC1; the interaction occurs in MIA PaCa-2 cells but not in MCF7 cells. Widely expressed in normal tissues. Expressed in pancreatic, renal, breast, colon, ovarian surface epithelial (OSE) cells. Highly expressed in various proliferating cancer cells.

Its subcellular location is the rough endoplasmic reticulum membrane. The protein resides in the nucleus membrane. Functionally, sigma-2 receptor which contributes to ameliorate dysfunctional cellular processes and slow degenerative progression by regulating cell functions including cholesterol biosynthesis/trafficking, membrane trafficking, autophagy, lipid membrane-bound protein trafficking, and receptor stabilization at the cell surface. Forms a ternary complex with PGRMC1 receptor and low density lipoprotein receptor/LDLR at the plasma membrane, which increases LDLR-mediated LDL cholesterol internalization. Decreases lysosomal sterol transporter NPC1 availability to the cell, probably through NPC1-binding, hence controlling lipid transport, including cholesterol and LBPA, outside of late endosome/lysosome. Binds regio- and stereoselective ligand 20(S)-hydroxycholesterol (20(S)-OHC) which enhances TMEM97-NPC1 interaction and decreases TMEM97-PGRMC1 and TMEM97-TSPO interactions, thereby linking OHC binding to cholesterol homeostasis. Also able to bind cholesterol. Binds histatin 1 (Hst 1)/HN1 salivary peptide at the ER membrane, which is critical for increasing mitochondria-ER contacts and stimulating Hst1 wound healing properties. May alter the activity of some cytochrome P450 proteins. Although shows homologies with sterol isomerases (EXPERA domain), not able to catalyze sterol isomerization. However, may act as sensors of these molecules. Acts as a quality control factor in the ER, promoting the proteolytic degradation of nonproductive and extramitochondrial precursor proteins in the ER membrane thus removing them from the ER surface. The polypeptide is Sigma intracellular receptor 2 (Homo sapiens (Human)).